The following is a 444-amino-acid chain: Phosphoglucosamine mutase (444 aa).

The Phosphoserine intermediate role is filled by serine 102. Mg(2+)-binding residues include serine 102, aspartate 241, aspartate 243, and aspartate 245. Position 102 is a phosphoserine (serine 102).

The protein belongs to the phosphohexose mutase family. Mg(2+) is required as a cofactor. Activated by phosphorylation.

It carries out the reaction alpha-D-glucosamine 1-phosphate = D-glucosamine 6-phosphate. Functionally, catalyzes the conversion of glucosamine-6-phosphate to glucosamine-1-phosphate. This chain is Phosphoglucosamine mutase, found in Actinobacillus pleuropneumoniae serotype 7 (strain AP76).